We begin with the raw amino-acid sequence, 212 residues long: MALIDISRSVSPATAVWPGDQEVQWTWTARRNEDESSVNLGSLRLSTHTGTHVDAPLHVKRQGQATDDLPLDSFVGPARVVDVNANAPSVRPEHIGQLDGASAERVLFKTSSGVSPDDEWPDAVVPIQPDTIHALADAGVSLVGTDAPSVDPLDSTDLPAHHALLDTGIVNLEGLVLTNVPPGRYELIALPLKIVGGDAAPVRAVLRDAPDP.

Residue tryptophan 17 participates in substrate binding. Zn(2+)-binding residues include histidine 48, histidine 52, and aspartate 54. Histidine 58 (proton donor/acceptor) is an active-site residue. Residues histidine 161 and glutamate 173 each coordinate Zn(2+).

It belongs to the Cyclase 1 superfamily. KynB family. As to quaternary structure, homodimer. The cofactor is Zn(2+).

It carries out the reaction N-formyl-L-kynurenine + H2O = L-kynurenine + formate + H(+). Its pathway is amino-acid degradation; L-tryptophan degradation via kynurenine pathway; L-kynurenine from L-tryptophan: step 2/2. Catalyzes the hydrolysis of N-formyl-L-kynurenine to L-kynurenine, the second step in the kynurenine pathway of tryptophan degradation. The protein is Kynurenine formamidase of Salinibacter ruber (strain DSM 13855 / M31).